Here is a 957-residue protein sequence, read N- to C-terminus: SH3 domain-binding protein 4-B (957 aa).

Residues 54-113 (ENVKEVVAIKDYCPNNFTTLKFSKGEHLYVLDASGGDWWYAHNTTEMGYIPSSYVQPLNY) enclose the SH3 1 domain. Positions 312–449 (TSIVCRLDSS…LEPVMYVVMV (138 aa)) constitute a ZU5 domain. The region spanning 649 to 719 (TSLKYGKLIK…HAKNVLVVGK (71 aa)) is the SH3 2 domain.

Homodimer or homooligomer.

The protein resides in the membrane. It localises to the clathrin-coated pit. Its subcellular location is the cytoplasmic vesicle. The protein localises to the clathrin-coated vesicle. It is found in the nucleus. Its function is as follows. Possible role in regulating endocytosis of the transferrin receptor at the plasma membrane. Alternatively, may function as a negative regulator of the amino acid-induced TOR signaling by inhibiting the formation of active Rag GTPase complexes. Preferentially binds inactive Rag GTPase complexes and prevents their interaction with the mTORC1 complex inhibiting its relocalization to lysosomes and its activation. Thereby, may indirectly regulate cell growth, proliferation and autophagy. The protein is SH3 domain-binding protein 4-B (sh3bp4-b) of Xenopus laevis (African clawed frog).